The sequence spans 465 residues: Gamma-aminobutyric acid receptor subunit rho-2 (465 aa).

The N-terminal stretch at 1 to 20 (MPYLMRLALVLFCLMALVES) is a signal peptide. Topologically, residues 21 to 260 (RKPRRKRWTG…LYINFTLRRH (240 aa)) are extracellular. Residue R105 coordinates 4-aminobutanoate. A glycan (N-linked (GlcNAc...) asparagine) is linked at N120. S169 provides a ligand contact to 4-aminobutanoate. Residues C178 and C192 are joined by a disulfide bond. 4-aminobutanoate is bound at residue E197. The N-linked (GlcNAc...) asparagine glycan is linked to N254. The chain crosses the membrane as a helical span at residues 261–281 (IFFFLLQTYFPATLMVMLSWV). Topologically, residues 282–293 (SFWIDHRAVPAR) are cytoplasmic. A helical membrane pass occupies residues 294-314 (VSLGIMTVLTMSTIITGVNAS). The Extracellular segment spans residues 315–325 (MPRVSYIRAVD). Residues 326 to 346 (IYLWVSFVFVFLSVLEYAAVN) traverse the membrane as a helical segment. The Cytoplasmic portion of the chain corresponds to 347-443 (YLTTLQEQKE…IFQNTHAIDK (97 aa)). Residues 444–464 (YSRLIFPAFYIVFNLIYWSVF) form a helical membrane-spanning segment. Residue S465 is a topological domain, extracellular.

Belongs to the ligand-gated ion channel (TC 1.A.9) family. Gamma-aminobutyric acid receptor (TC 1.A.9.5) subfamily. GABRR2 sub-subfamily. Three rho subunits (rho-1/GBRR1, rho-2/GBRR2 and rho-3/GBRR3) coassemble either to form functional homopentamers or heteropentamers. Rho-2 is unable to form a functional homopentamer. Interacts with SQSTM1. Expressed in the cerebellum.

Its subcellular location is the postsynaptic cell membrane. It is found in the cell membrane. It catalyses the reaction chloride(in) = chloride(out). In terms of biological role, rho subunit of the pentameric ligand-gated chloride channels responsible for mediating the effects of gamma-aminobutyric acid (GABA), the major inhibitory neurotransmitter in the brain. Rho-containing GABA-gated chloride channels are a subclass of GABA(A) receptors (GABAARs) entirely composed of rho subunits, where GABA molecules bind at the rho intersubunit interfaces. When activated by GABA, rho-GABAARs selectively allow the flow of chloride anions across the cell membrane down their electrochemical gradient. Rho-2 GABAARs may contribute to the regulation of glial development in the cerebellum by controlling extrasynaptic transmission. Rho-2 GABAARs are also involved in neuronal tonic (extrasynaptic) and phasic (synaptic) transmission in the Purkinje neurons of the cerebellum. Rho-2 GABAARs expressed in retina may play a role in retinal neurotransmission. The chain is Gamma-aminobutyric acid receptor subunit rho-2 from Mus musculus (Mouse).